The primary structure comprises 97 residues: Large ribosomal subunit protein uL23 (97 aa).

This sequence belongs to the universal ribosomal protein uL23 family. In terms of assembly, part of the 50S ribosomal subunit. Contacts protein L29, and trigger factor when it is bound to the ribosome.

One of the early assembly proteins it binds 23S rRNA. One of the proteins that surrounds the polypeptide exit tunnel on the outside of the ribosome. Forms the main docking site for trigger factor binding to the ribosome. This Anaeromyxobacter dehalogenans (strain 2CP-C) protein is Large ribosomal subunit protein uL23.